Here is a 1152-residue protein sequence, read N- to C-terminus: Calcium-activated potassium channel subunit alpha-1 (1152 aa).

The disordered stretch occupies residues 1 to 37 (MSSNIHANHLSLDASSSSSSSSSSSSSSSSSSSSVHE). Over 1-60 (MSSNIHANHLSLDASSSSSSSSSSSSSSSSSSSSVHEPKMDALIIPVTMEVPCDSRGQRM) the chain is Extracellular. Residues 15–34 (SSSSSSSSSSSSSSSSSSSS) are compositionally biased toward low complexity. Residues 61–81 (WWAFLASSMVTFFGGLFIILL) traverse the membrane as a helical segment. Over 82–152 (WRTLKYLWTV…MISAQTLTGR (71 aa)) the chain is Cytoplasmic. 3 S-palmitoyl cysteine lipidation sites follow: Cys92, Cys93, and Cys95. Residues 153-173 (VLVVLVFALSIGALVIYFIDS) form a helical membrane-spanning segment. The Extracellular segment spans residues 174-188 (SNPIESCQNFYKDFT). The chain crosses the membrane as a helical span at residues 189-209 (LQIDMAFNVFFLLYFGLRFIA). Residues 210–213 (ANDK) are Cytoplasmic-facing. Residues 214–234 (LWFWLEVNSVVDFFTVPPVFV) form a helical membrane-spanning segment. The Extracellular portion of the chain corresponds to 235–238 (SVYL). Residues 239–259 (NRSWLGLRFLRALRLIQFSEI) form a helical; Voltage-sensor membrane-spanning segment. Over 260–274 (LQFLNILKTSNSIKL) the chain is Cytoplasmic. The chain crosses the membrane as a helical span at residues 275-295 (VNLLSIFISTWLTAAGFIHLV). The Extracellular portion of the chain corresponds to 296–309 (ENSGDPWENFQNNQ). An intramembrane region (pore-forming) is located at residues 310-332 (ALTYWECVYLLMVTMSTVGYGDV). Positions 326 to 329 (TVGY) match the Selectivity for potassium motif. Topologically, residues 333 to 341 (YAKTTLGRL) are extracellular. The chain crosses the membrane as a helical span at residues 342–362 (FMVFFILGGLAMFASYVPEII). The Cytoplasmic segment spans residues 363–1152 (ELIGNRKKYG…KQKYVQEERL (790 aa)). Positions 381-523 (RKHIVVCGHI…WNWKEGDDAI (143 aa)) constitute an RCK N-terminal 1 domain. 3 residues coordinate Mg(2+): Glu413, Gln436, and Glu438. The segment at 530–550 (LGFIAQSCLAQGLSTMLANLF) is segment S7. A segment S8 region spans residues 587–607 (LSFPTVCELCFVKLKLLMIAI). The segment at 651-655 (CKACH) is heme-binding motif. The tract at residues 675-703 (EQPSTLSPKKKQRNGGMRNSPSSSPKLMR) is disordered. A Phosphothreonine modification is found at Thr679. Ser681, Ser694, and Ser698 each carry phosphoserine. Positions 753–773 (VLSGHVVVCIFGDVSSALIGL) are segment S9. The RCK N-terminal 2 domain occupies 755-899 (SGHVVVCIFG…MDRSSPDNSP (145 aa)). Phosphothreonine is present on Thr886. A phosphoserine mark is found at Ser894 and Ser898. The short motif at 919-941 (TELVNDTNVQFLDQDDDDDPDTE) is the Calcium bowl element. Residues Gln928, Asp931, Asp934, and Asp936 each contribute to the Ca(2+) site. The segment S10 stretch occupies residues 948 to 968 (FACGTAFAVSVLDSLMSATYF). Residues 1102–1127 (RASLSHSSHSSQSSSKKSSSVHSIPS) show a composition bias toward low complexity. A disordered region spans residues 1102–1152 (RASLSHSSHSSQSSSKKSSSVHSIPSTANRQNRPKSRESRDKQKYVQEERL). Residues 1136 to 1152 (KSRESRDKQKYVQEERL) show a composition bias toward basic and acidic residues. Ser1137 and Ser1140 each carry phosphoserine.

The protein belongs to the potassium channel family. Calcium-activated (TC 1.A.1.3) subfamily. KCa1.1/KCNMA1 sub-subfamily. As to quaternary structure, homotetramer; which constitutes the calcium-activated potassium channel. Interacts with beta subunits KCNMB1, KCNMB2, KCNMB3 and KCNMB4. Interacts with gamma subunits LRRC26, LRRC38, LRRC52 and LRRC55. Beta and gamma subunits are accessory, and modulate its activity. Interacts with RAB11B. In terms of processing, phosphorylated. Phosphorylation by kinases such as PKA and/or PKG. In smooth muscles, phosphorylation affects its activity. Post-translationally, palmitoylation by ZDHHC22 and ZDHHC23 within the intracellular linker between the S0 and S1 transmembrane domains regulates localization to the plasma membrane. Depalmitoylated by LYPLA1 and LYPLAL1, leading to retard exit from the trans-Golgi network.

The protein resides in the cell membrane. It carries out the reaction K(+)(in) = K(+)(out). Its activity is regulated as follows. Ethanol and carbon monoxide-bound heme increase channel activation. Heme inhibits channel activation. Functionally, potassium channel activated by both membrane depolarization or increase in cytosolic Ca(2+) that mediates export of K(+). It is also activated by the concentration of cytosolic Mg(2+). Its activation dampens the excitatory events that elevate the cytosolic Ca(2+) concentration and/or depolarize the cell membrane. It therefore contributes to repolarization of the membrane potential. Plays a key role in controlling excitability in a number of systems, such as regulation of the contraction of smooth muscle, the tuning of hair cells in the cochlea, regulation of transmitter release, and innate immunity. In smooth muscles, its activation by high level of Ca(2+), caused by ryanodine receptors in the sarcoplasmic reticulum, regulates the membrane potential. In cochlea cells, its number and kinetic properties partly determine the characteristic frequency of each hair cell and thereby helps to establish a tonotopic map. Kinetics of KCNMA1 channels are determined by alternative splicing, phosphorylation status and its combination with modulating beta subunits. Highly sensitive to both iberiotoxin (IbTx) and charybdotoxin (CTX). The protein is Calcium-activated potassium channel subunit alpha-1 (KCNMA1) of Sus scrofa (Pig).